Here is a 265-residue protein sequence, read N- to C-terminus: Mlc titration factor A (265 aa).

Zn(2+)-binding residues include His-111, His-148, His-152, and Glu-211.

This sequence belongs to the MtfA family. Interacts with Mlc with high affinity. The cofactor is Zn(2+).

The protein localises to the cytoplasm. Its activity is regulated as follows. Proteolytic activity is stimulated by interaction with Mlc. Addition of the chelators EDTA or phenanthroline significantly reduces the peptidase activity, whereas the addition of other protease inhibitors has much less effect. Its function is as follows. Involved in the modulation of the activity of the glucose-phosphotransferase system (glucose-PTS). Interacts with the transcriptional repressor Mlc, preventing its interaction with DNA and leading to the modulation of expression of genes regulated by Mlc, including ptsG, which encodes the PTS system glucose-specific EIICB component. In terms of biological role, shows zinc-dependent metallopeptidase activity. In vitro, can cleave several artificial substrates. The greatest activity and specificity is observed for L-alanine fused to 4-nitroanilide (L-alanine-pNA). Shows significantly lower activity towards L-arginine-pNA, L-proline-pNA, hippuryl-L-phenylalanine and hippuryl-L-arginine, and cannot use FTC-casein. Mlc does not appear to be a biologically relevant peptidase substrate. Biologically relevant targets may have a function in growth transition under changing environmental conditions. This is Mlc titration factor A from Escherichia coli (strain K12).